Here is a 481-residue protein sequence, read N- to C-terminus: uncharacterized protein (481 aa).

11 helical membrane passes run 14–34 (LGFC…GIFL), 46–66 (FAPM…IVFA), 90–110 (IGIY…GVLA), 134–154 (FSVK…INLF), 167–187 (TVGK…IITT), 218–238 (FSSM…FESI), 258–278 (IAIF…MLLG), 303–323 (IIVV…SFGA), 377–397 (LAVI…IALA), 411–431 (AFTD…LAVS), and 446–466 (YFSI…AYLH).

It belongs to the amino acid-polyamine-organocation (APC) superfamily.

The protein localises to the cell membrane. In terms of biological role, probable amino-acid or metabolite transport protein. This is an uncharacterized protein from Mycobacterium bovis (strain ATCC BAA-935 / AF2122/97).